The primary structure comprises 713 residues: Calpastatin (713 aa).

Over residues Met-1–Ser-21 the composition is skewed to low complexity. The disordered stretch occupies residues Met-1–Gly-152. Positions Val-47 to Gly-64 are enriched in polar residues. Phosphoserine is present on Ser-57. Lys-69 participates in a covalent cross-link: Glycyl lysine isopeptide (Lys-Gly) (interchain with G-Cter in SUMO2). At Lys-86 the chain carries N6-acetyllysine. Over residues Ser-120–Glu-129 the composition is skewed to polar residues. A phosphoserine mark is found at Ser-122 and Ser-171. Position 173 is a phosphothreonine (Thr-173). The stretch at Thr-208 to Ser-260 is one Inhibitory domain 1 repeat. The disordered stretch occupies residues Ile-253–Glu-402. A phosphoserine mark is found at Ser-260 and Ser-281. Composition is skewed to polar residues over residues Ser-275–Lys-285, Gly-294–Val-304, and Gln-326–Leu-346. The Inhibitory domain 2 repeat unit spans residues Asp-341–Pro-393. Composition is skewed to basic and acidic residues over residues Gln-351–Cys-365 and Tyr-376–Lys-387. Phosphoserine is present on residues Ser-401, Ser-403, Ser-410, and Ser-445. The disordered stretch occupies residues Leu-442–Gln-507. A compositionally biased stretch (basic and acidic residues) spans Thr-448–Glu-505. The Inhibitory domain 3 repeat unit spans residues Glu-451 to Ala-504. Phosphoserine is present on residues Ser-521 and Ser-532. Positions Val-544–Thr-558 are enriched in polar residues. A disordered region spans residues Val-544–Thr-713. Phosphoserine is present on residues Ser-580 and Ser-582. The Inhibitory domain 4 repeat unit spans residues Pro-588–Lys-641. Basic and acidic residues-rich tracts occupy residues Pro-588–Gln-648 and Ser-687–Thr-713.

This sequence belongs to the protease inhibitor I27 (calpastatin) family.

Functionally, specific inhibition of calpain (calcium-dependent cysteine protease). Plays a key role in postmortem tenderization of meat and have been proposed to be involved in muscle protein degradation in living tissue. In Rattus norvegicus (Rat), this protein is Calpastatin (Cast).